A 367-amino-acid chain; its full sequence is Peptide chain release factor 1 (367 aa).

Residue Gln238 is modified to N5-methylglutamine.

This sequence belongs to the prokaryotic/mitochondrial release factor family. In terms of processing, methylated by PrmC. Methylation increases the termination efficiency of RF1.

The protein localises to the cytoplasm. Peptide chain release factor 1 directs the termination of translation in response to the peptide chain termination codons UAG and UAA. This is Peptide chain release factor 1 from Dictyoglomus turgidum (strain DSM 6724 / Z-1310).